Here is a 106-residue protein sequence, read N- to C-terminus: Large ribosomal subunit protein uL23 (106 aa).

It belongs to the universal ribosomal protein uL23 family. Part of the 50S ribosomal subunit. Contacts protein L29, and trigger factor when it is bound to the ribosome.

Functionally, one of the early assembly proteins it binds 23S rRNA. One of the proteins that surrounds the polypeptide exit tunnel on the outside of the ribosome. Forms the main docking site for trigger factor binding to the ribosome. This Neisseria meningitidis serogroup A / serotype 4A (strain DSM 15465 / Z2491) protein is Large ribosomal subunit protein uL23.